We begin with the raw amino-acid sequence, 332 residues long: Flotillin-like protein FloA (332 aa).

Residues 9–29 (FILIGGGIIFVVLFFHYVPFF) traverse the membrane as a helical segment.

The protein belongs to the flotillin-like FloA family. Homooligomerizes.

It localises to the cell membrane. The protein resides in the membrane raft. Functionally, found in functional membrane microdomains (FMM) that may be equivalent to eukaryotic membrane rafts. FMMs are highly dynamic and increase in number as cells age. Flotillins are thought to be important factors in membrane fluidity. The chain is Flotillin-like protein FloA from Phocaeicola vulgatus (strain ATCC 8482 / DSM 1447 / JCM 5826 / CCUG 4940 / NBRC 14291 / NCTC 11154) (Bacteroides vulgatus).